The primary structure comprises 633 residues: Copine-7 (633 aa).

C2 domains lie at 2–133 (SAGS…MRVS) and 212–339 (NAGK…AQWD). Residues Asp245, Asp251, Asp307, Asp309, and Asp315 each contribute to the Ca(2+) site. The VWFA domain occupies 382 to 581 (HFTVAIDFTA…PALRDIVQFV (200 aa)).

It belongs to the copine family. Ca(2+) is required as a cofactor. Expressed in the brain, testis, thymus and small intestine.

It is found in the cytoplasm. The protein resides in the nucleus. Its subcellular location is the cell membrane. Its function is as follows. Calcium-dependent phospholipid-binding protein that may play a role in calcium-mediated intracellular processes. The protein is Copine-7 of Homo sapiens (Human).